We begin with the raw amino-acid sequence, 84 residues long: Cell division topological specificity factor (84 aa).

It belongs to the MinE family.

Functionally, prevents the cell division inhibition by proteins MinC and MinD at internal division sites while permitting inhibition at polar sites. This ensures cell division at the proper site by restricting the formation of a division septum at the midpoint of the long axis of the cell. This is Cell division topological specificity factor from Desulfotalea psychrophila (strain LSv54 / DSM 12343).